A 372-amino-acid polypeptide reads, in one-letter code: Ligninase C (372 aa).

The first 26 residues, 1–26, serve as a signal peptide directing secretion; sequence MAFKSLLSFVSVIGALQGANAALTRR. Residue His74 is the Proton acceptor of the active site. Ca(2+) is bound by residues Asp75, Gly93, Asp95, and Ser97. Asn129 is a glycosylation site (N-linked (GlcNAc...) asparagine). His205 serves as a coordination point for heme b. Thr206, Asp223, Thr225, Leu228, and Asp230 together coordinate Ca(2+). Residues 346-372 are disordered; the sequence is TPFPTFPTDPGPKTAVAPVPKPPAARK.

The protein belongs to the peroxidase family. Ligninase subfamily. Ca(2+) serves as cofactor. Heme b is required as a cofactor.

The catalysed reaction is 1-(3,4-dimethoxyphenyl)-2-(2-methoxyphenoxy)propane-1,3-diol + H2O2 = 3,4-dimethoxybenzaldehyde + guaiacol + glycolaldehyde + H2O. It carries out the reaction 2 (3,4-dimethoxyphenyl)methanol + H2O2 = 2 (3,4-dimethoxyphenyl)methanol radical + 2 H2O. It functions in the pathway secondary metabolite metabolism; lignin degradation. Functionally, depolymerization of lignin. Catalyzes the C(alpha)-C(beta) cleavage of the propyl side chains of lignin. The chain is Ligninase C from Trametes versicolor (White-rot fungus).